The sequence spans 266 residues: NAD-capped RNA hydrolase NudC (266 aa).

Arg74 contributes to the substrate binding site. Zn(2+) is bound by residues Cys103, Cys106, Cys121, and Cys124. Tyr129 contributes to the substrate binding site. The region spanning 130-253 (PRVSPCIIVA…TIARVLIDET (124 aa)) is the Nudix hydrolase domain. Ala163, Glu179, and Glu183 together coordinate a divalent metal cation. A Nudix box motif is present at residues 164–185 (GFVEAGETLEQCVAREVEEETG). 197–204 (QPWAFPSN) provides a ligand contact to substrate. Glu224 is a binding site for a divalent metal cation. Ala246 contributes to the substrate binding site.

Belongs to the Nudix hydrolase family. NudC subfamily. In terms of assembly, homodimer. It depends on Mg(2+) as a cofactor. Mn(2+) is required as a cofactor. The cofactor is Zn(2+).

The enzyme catalyses a 5'-end NAD(+)-phospho-ribonucleoside in mRNA + H2O = a 5'-end phospho-adenosine-phospho-ribonucleoside in mRNA + beta-nicotinamide D-ribonucleotide + 2 H(+). It catalyses the reaction NAD(+) + H2O = beta-nicotinamide D-ribonucleotide + AMP + 2 H(+). It carries out the reaction NADH + H2O = reduced beta-nicotinamide D-ribonucleotide + AMP + 2 H(+). MRNA decapping enzyme that specifically removes the nicotinamide adenine dinucleotide (NAD) cap from a subset of mRNAs by hydrolyzing the diphosphate linkage to produce nicotinamide mononucleotide (NMN) and 5' monophosphate mRNA. The NAD-cap is present at the 5'-end of some mRNAs and stabilizes RNA against 5'-processing. Has preference for mRNAs with a 5'-end purine. Catalyzes the hydrolysis of a broad range of dinucleotide pyrophosphates. The protein is NAD-capped RNA hydrolase NudC of Photobacterium profundum (strain SS9).